The sequence spans 199 residues: Dephospho-CoA kinase (199 aa).

A DPCK domain is found at 4–199; that stretch reads VLGITGGIAT…KWLEEQIGKK (196 aa). An ATP-binding site is contributed by 12 to 17; sequence ATGKST.

This sequence belongs to the CoaE family.

It is found in the cytoplasm. It carries out the reaction 3'-dephospho-CoA + ATP = ADP + CoA + H(+). The protein operates within cofactor biosynthesis; coenzyme A biosynthesis; CoA from (R)-pantothenate: step 5/5. Its function is as follows. Catalyzes the phosphorylation of the 3'-hydroxyl group of dephosphocoenzyme A to form coenzyme A. In Enterococcus faecalis (strain ATCC 700802 / V583), this protein is Dephospho-CoA kinase.